Reading from the N-terminus, the 664-residue chain is DNA ligase (664 aa).

NAD(+)-binding positions include 32 to 36 (DAEYD), 81 to 82 (SL), and Glu-113. Residue Lys-115 is the N6-AMP-lysine intermediate of the active site. NAD(+) is bound by residues Arg-136, Glu-173, Lys-289, and Lys-313. Positions 407, 410, 425, and 431 each coordinate Zn(2+). Positions 586-664 (ASEQPFAGKT…EEQLQAALQS (79 aa)) constitute a BRCT domain.

Belongs to the NAD-dependent DNA ligase family. LigA subfamily. It depends on Mg(2+) as a cofactor. The cofactor is Mn(2+).

It carries out the reaction NAD(+) + (deoxyribonucleotide)n-3'-hydroxyl + 5'-phospho-(deoxyribonucleotide)m = (deoxyribonucleotide)n+m + AMP + beta-nicotinamide D-nucleotide.. In terms of biological role, DNA ligase that catalyzes the formation of phosphodiester linkages between 5'-phosphoryl and 3'-hydroxyl groups in double-stranded DNA using NAD as a coenzyme and as the energy source for the reaction. It is essential for DNA replication and repair of damaged DNA. In Aeromonas salmonicida (strain A449), this protein is DNA ligase.